The primary structure comprises 237 residues: E3 protein (237 aa).

Over residues 73–103 (VEVVEDEEEEEAAEDVEEPTSEEDSEDEWEE) the composition is skewed to acidic residues. Residues 73–105 (VEVVEDEEEEEAAEDVEEPTSEEDSEDEWEEGY) form a disordered region.

In terms of biological role, hypothesized to function in the shutoff of host biosyntheses. But it seems dispensable both for host shutoff and for phage multiplication. Its shutoff function is probably not entirely specific to host activities. This Bacillus phage SP01 (Bacteriophage SP01) protein is E3 protein (44).